The primary structure comprises 40 residues: Dolichyl-diphosphooligosaccharide--protein glycosyltransferase subunit 4 (40 aa).

Residues 1-4 (MITD) lie on the Lumenal side of the membrane. A helical membrane pass occupies residues 5–25 (VQLAIFSNVLGVFLFLLVVAY). Over 26 to 40 (HYINANTGKSIIKSK) the chain is Cytoplasmic.

Belongs to the OST4 family. In terms of assembly, component of the oligosaccharyltransferase (OST) complex.

Its subcellular location is the endoplasmic reticulum membrane. Its function is as follows. Subunit of the oligosaccharyl transferase (OST) complex that catalyzes the initial transfer of a defined glycan (Glc(3)Man(9)GlcNAc(2) in eukaryotes) from the lipid carrier dolichol-pyrophosphate to an asparagine residue within an Asn-X-Ser/Thr consensus motif in nascent polypeptide chains, the first step in protein N-glycosylation. N-glycosylation occurs cotranslationally and the complex associates with the Sec61 complex at the channel-forming translocon complex that mediates protein translocation across the endoplasmic reticulum (ER). All subunits are required for a maximal enzyme activity. The protein is Dolichyl-diphosphooligosaccharide--protein glycosyltransferase subunit 4 of Drosophila grimshawi (Hawaiian fruit fly).